A 296-amino-acid chain; its full sequence is MNLENLTTERRNENTMGLDEMSVKEALQKMNQEDQKVAMAVGQELAAIEPVVEAIIKSFNQGGRLIYMGAGTSGRLGVLDAAECVPTFGVEPEMVQGLIAGGQKAMTVAVEGAEDSKELGRQDLVDLKLSANDIVVGIAASGRTPYVIGGLEYATTVGAATATVACNKNAEISKYAQMPIEVDAGPEFLTGSTRLKSGTAQKLILNMLSTISMIGIGKVYNNLMVDVKPTNEKLVERSKRIIMEATGCSYEVAELKFVEAEENVKLAIVMILTDSTKEEATQKLIDGNQFIKNTLN.

Positions 55 to 218 constitute an SIS domain; the sequence is IIKSFNQGGR…STISMIGIGK (164 aa). The Proton donor role is filled by glutamate 83. The active site involves glutamate 114.

This sequence belongs to the GCKR-like family. MurNAc-6-P etherase subfamily. Homodimer.

It carries out the reaction N-acetyl-D-muramate 6-phosphate + H2O = N-acetyl-D-glucosamine 6-phosphate + (R)-lactate. It participates in amino-sugar metabolism; N-acetylmuramate degradation. Functionally, specifically catalyzes the cleavage of the D-lactyl ether substituent of MurNAc 6-phosphate, producing GlcNAc 6-phosphate and D-lactate. This Enterococcus faecalis (strain ATCC 700802 / V583) protein is N-acetylmuramic acid 6-phosphate etherase 2.